Here is a 712-residue protein sequence, read N- to C-terminus: Polyribonucleotide nucleotidyltransferase (712 aa).

Mg(2+) contacts are provided by Asp-487 and Asp-493. Residues 554–613 (PKIITMTINPDKIRDVIGPSGKQINKIIEETGVKIDIEQDGTVFISSINQEMNDKAKKII) enclose the KH domain. The S1 motif domain occupies 623–691 (GEIYEGKVKR…KQGRVNLSRK (69 aa)).

The protein belongs to the polyribonucleotide nucleotidyltransferase family. The cofactor is Mg(2+).

The protein resides in the cytoplasm. The catalysed reaction is RNA(n+1) + phosphate = RNA(n) + a ribonucleoside 5'-diphosphate. Functionally, involved in mRNA degradation. Catalyzes the phosphorolysis of single-stranded polyribonucleotides processively in the 3'- to 5'-direction. The sequence is that of Polyribonucleotide nucleotidyltransferase from Bacillus cereus (strain ATCC 10987 / NRS 248).